Consider the following 228-residue polypeptide: R-spondin-4 (228 aa).

The N-terminal stretch at 1 to 19 (MRAPLCLLLLLAHAVDMLA) is a signal peptide. An N-linked (GlcNAc...) asparagine glycan is attached at Asn34. Intrachain disulfides connect Cys35/Cys41, Cys38/Cys47, Cys50/Cys69, Cys73/Cys88, Cys91/Cys98, Cys95/Cys104, Cys107/Cys118, Cys122/Cys135, Cys139/Cys181, Cys150/Cys157, and Cys190/Cys196. Residues 85–128 (ANRCKKCGATCESCFSQDFCIRCKRRFHLYKGKCLPSCPPGTLT) form an FU repeat. Residues 138–197 (ECEPSPWGSWSPCIHNGKTCGSGWGLETRVREAGPAKQEETASCRVLSESRKCPIKRLCP) form the TSP type-1 domain. The segment at 193 to 228 (KRLCPGERNPRQKNRKDRRQRKDRKLERRPHQRGSQ) is disordered. The segment covering 203–228 (RQKNRKDRRQRKDRKLERRPHQRGSQ) has biased composition (basic residues).

This sequence belongs to the R-spondin family. In terms of assembly, binds heparin. Interacts with LGR4, LGR5 and LGR6.

It is found in the secreted. Functionally, activator of the canonical Wnt signaling pathway by acting as a ligand for LGR4-6 receptors. Upon binding to LGR4-6 (LGR4, LGR5 or LGR6), LGR4-6 associate with phosphorylated LRP6 and frizzled receptors that are activated by extracellular Wnt receptors, triggering the canonical Wnt signaling pathway to increase expression of target genes. Also regulates the canonical Wnt/beta-catenin-dependent pathway and non-canonical Wnt signaling by acting as an inhibitor of ZNRF3, an important regulator of the Wnt signaling pathway. The protein is R-spondin-4 (Rspo4) of Mus musculus (Mouse).